The sequence spans 604 residues: uncharacterized protein (604 aa).

The first 19 residues, Met1–Ala19, serve as a signal peptide directing secretion.

To H.influenzae HbpA.

This is an uncharacterized protein from Escherichia coli (strain K12).